The chain runs to 451 residues: Phosphoglucosamine mutase (451 aa).

Ser-107 acts as the Phosphoserine intermediate in catalysis. Mg(2+) contacts are provided by Ser-107, Asp-246, Asp-248, and Asp-250. At Ser-107 the chain carries Phosphoserine.

It belongs to the phosphohexose mutase family. The cofactor is Mg(2+). In terms of processing, activated by phosphorylation.

The enzyme catalyses alpha-D-glucosamine 1-phosphate = D-glucosamine 6-phosphate. In terms of biological role, catalyzes the conversion of glucosamine-6-phosphate to glucosamine-1-phosphate. The chain is Phosphoglucosamine mutase from Burkholderia vietnamiensis (strain G4 / LMG 22486) (Burkholderia cepacia (strain R1808)).